The primary structure comprises 235 residues: Ribitol-5-phosphate cytidylyltransferase (235 aa).

CTP contacts are provided by residues 7 to 10 (LAGG), 82 to 88 (GADRNTS), and Ser-113.

The protein belongs to the IspD/TarI cytidylyltransferase family. TarI subfamily.

It carries out the reaction D-ribitol 5-phosphate + CTP + H(+) = CDP-L-ribitol + diphosphate. It participates in cell wall biogenesis; poly(ribitol phosphate) teichoic acid biosynthesis. Catalyzes the transfer of the cytidylyl group of CTP to D-ribitol 5-phosphate. The chain is Ribitol-5-phosphate cytidylyltransferase from Streptococcus pneumoniae (strain CGSP14).